The following is a 222-amino-acid chain: Cytidylate kinase (222 aa).

11 to 19 is an ATP binding site; the sequence is GPSGSGKST.

This sequence belongs to the cytidylate kinase family. Type 1 subfamily.

The protein localises to the cytoplasm. It carries out the reaction CMP + ATP = CDP + ADP. The catalysed reaction is dCMP + ATP = dCDP + ADP. This Ureaplasma urealyticum serovar 10 (strain ATCC 33699 / Western) protein is Cytidylate kinase.